The primary structure comprises 329 residues: Tryptophan--tRNA ligase (329 aa).

ATP contacts are provided by residues 9-11 (QPS) and 17-18 (GN). A 'HIGH' region motif is present at residues 10–18 (PSGTITLGN). An L-tryptophan-binding site is contributed by Asp-132. ATP contacts are provided by residues 144 to 146 (GDD), Val-183, and 192 to 196 (KMSKS). The short motif at 192 to 196 (KMSKS) is the 'KMSKS' region element.

The protein belongs to the class-I aminoacyl-tRNA synthetase family. In terms of assembly, homodimer.

It localises to the cytoplasm. It catalyses the reaction tRNA(Trp) + L-tryptophan + ATP = L-tryptophyl-tRNA(Trp) + AMP + diphosphate + H(+). In terms of biological role, catalyzes the attachment of tryptophan to tRNA(Trp). This Bacillus anthracis protein is Tryptophan--tRNA ligase.